The following is a 236-amino-acid chain: C-&gt;U-editing enzyme APOBEC-1 (236 aa).

The CMP/dCMP-type deaminase domain maps to 10–134 (GDPTLRRRIE…QRNRQGLRDL (125 aa)). Residue H61 participates in Zn(2+) binding. The Proton donor role is filled by E63. 2 residues coordinate Zn(2+): C93 and C96.

Belongs to the cytidine and deoxycytidylate deaminase family. As to quaternary structure, homodimer. Interacts with A1CF; form an mRNA editing complex. Interacts with RBM47; form an mRNA editing complex. Found in a complex with CELF2/CUGBP2 and A1CF. Interacts with HNRPAB. Interacts with SYNCRIP. The cofactor is Zn(2+).

The protein localises to the cytoplasm. Its subcellular location is the nucleus. The catalysed reaction is a cytidine in mRNA + H2O + H(+) = a uridine in mRNA + NH4(+). It carries out the reaction cytidine(6666) in apoB mRNA + H2O + H(+) = uridine(6666) in apoB mRNA + NH4(+). Its function is as follows. Cytidine deaminase catalyzing the cytidine to uridine postranscriptional editing of a variety of mRNAs. Form complexes with cofactors that confer differential editing activity and selectivity. Responsible for the postranscriptional editing of a CAA codon for Gln to a UAA codon for stop in the apolipoprotein B mRNA. Also involved in CGA (Arg) to UGA (Stop) editing in the NF1 mRNA. May also play a role in the epigenetic regulation of gene expression by participating in DNA demethylation. This chain is C-&gt;U-editing enzyme APOBEC-1, found in Pongo pygmaeus (Bornean orangutan).